Reading from the N-terminus, the 76-residue chain is Omega-conotoxin-like TxO2 (76 aa).

Residues 1–22 (MKLTCVVIVAVLFLTAWTFVTA) form the signal peptide. The propeptide occupies 23–52 (APHSSNALENLYLKAHHEMNNPEDSELNKR). Disulfide bonds link Cys53–Cys67, Cys60–Cys71, and Cys66–Cys75.

Belongs to the conotoxin O1 superfamily. As to expression, expressed by the venom duct.

The protein resides in the secreted. Its function is as follows. Omega-conotoxins act at presynaptic membranes, they bind and block voltage-gated calcium channels (Cav). This chain is Omega-conotoxin-like TxO2, found in Conus textile (Cloth-of-gold cone).